Consider the following 240-residue polypeptide: Superoxide dismutase [Cu-Zn] (240 aa).

The N-terminal stretch at 1–32 (MPKPADHRNHAAVSTSVLSALFLGAGAALLSA) is a signal peptide. Cysteine 33 is lipidated: N-palmitoyl cysteine. Cysteine 33 carries the S-diacylglycerol cysteine lipid modification. Composition is skewed to polar residues over residues 36–51 (PQHA…SIWT) and 68–77 (GAQSLTSTLT). A disordered region spans residues 36-77 (PQHASTVPGTTPSIWTGSPAPSGLSGHDEESPGAQSLTSTLT). Cu cation contacts are provided by histidine 116 and histidine 118. An intrachain disulfide couples cysteine 123 to cysteine 234. The Zn(2+) site is built by histidine 146 and aspartate 158. Histidine 195 lines the Cu cation pocket.

The protein belongs to the Cu-Zn superoxide dismutase family. Cu cation is required as a cofactor. It depends on Zn(2+) as a cofactor.

It is found in the cell membrane. It catalyses the reaction 2 superoxide + 2 H(+) = H2O2 + O2. With respect to regulation, inhibited by the copper chelator diethyl dithiocarbamate. Its function is as follows. Destroys radicals which are normally produced within the cells and which are toxic to biological systems. May play a role in favoring mycobacterial survival in phagocytes. The polypeptide is Superoxide dismutase [Cu-Zn] (sodC) (Mycobacterium bovis (strain ATCC BAA-935 / AF2122/97)).